We begin with the raw amino-acid sequence, 1865 residues long: Endoribonuclease Dicer (1865 aa).

In terms of domain architecture, Helicase ATP-binding spans 41 to 213; sequence LLEAALEHNT…DLEEKIQNLE (173 aa). 54–61 lines the ATP pocket; the sequence is LNTGSGKT. Positions 161–164 match the DECH box motif; that stretch reads DECH. Residues 397–417 are disordered; it reads SWSDSEDDDEDEEAEAKEKTE. The segment covering 400–411 has biased composition (acidic residues); the sequence is DSEDDDEDEEAE. In terms of domain architecture, Helicase C-terminal spans 419–588; that stretch reads NFPSPFTNIL…SAECNDFELE (170 aa). The region spanning 616 to 708 is the Dicer dsRNA-binding fold domain; that stretch reads AIGHVNRYCA…MPVGKETVKY (93 aa). Residues 713–732 are disordered; the sequence is DLHDEEETSVPGRPGSTKRR. One can recognise a PAZ domain in the interval 881–1028; that stretch reads KFMEDIEKSE…LVPELCAIHP (148 aa). 2 stretches are compositionally biased toward polar residues: residues 1111 to 1128 and 1192 to 1201; these read GTSS…SMEV and STQTTTSVSV. Disordered stretches follow at residues 1111 to 1142 and 1190 to 1259; these read GTSS…PDEK and DLST…DCRS. The span at 1240 to 1252 shows a compositional bias: low complexity; sequence SETATSTPAPSET. The region spanning 1262–1385 is the RNase III 1 domain; that stretch reads AGPAWDSPKT…TDKWDSDENK (124 aa). Glutamate 1298, aspartate 1377, and aspartate 1380 together coordinate Mg(2+). Positions 1373–1417 are disordered; it reads KSSTDKWDSDENKDLANGKASDDEDEDDDDEPEEAEVEPSKEDVN. The segment covering 1374-1388 has biased composition (basic and acidic residues); sequence SSTDKWDSDENKDLA. Positions 1394–1409 are enriched in acidic residues; that stretch reads DDEDEDDDDEPEEAEV. Residues 1609–1767 enclose the RNase III 2 domain; sequence FLNFESKINY…LAGAIYMDSG (159 aa). 3 residues coordinate Mg(2+): glutamate 1648, aspartate 1753, and glutamate 1756. The region spanning 1792–1857 is the DRBM domain; it reads VPRSPVRELL…ARRALRSLKA (66 aa).

The protein belongs to the helicase family. Dicer subfamily. Component of the RISC loading complex (RLC), or micro-RNA (miRNA) loading complex (miRLC), which is composed of dicer1, ago2 and tarbp2; dicer1 and tarbp2 are required to process precursor miRNAs (pre-miRNAs) to mature miRNAs and then load them onto ago2. Note that the trimeric RLC/miRLC is also referred to as RISC. It depends on Mg(2+) as a cofactor. Requires Mn(2+) as cofactor.

Its subcellular location is the cytoplasm. It catalyses the reaction Endonucleolytic cleavage to 5'-phosphomonoester.. Its function is as follows. Double-stranded RNA (dsRNA) endoribonuclease playing a central role in short dsRNA-mediated post-transcriptional gene silencing. Cleaves naturally occurring long dsRNAs and short hairpin pre-microRNAs (miRNA) into fragments of twenty-one to twenty-three nucleotides with 3' overhang of two nucleotides, producing respectively short interfering RNAs (siRNA) and mature microRNAs. SiRNAs and miRNAs serve as guide to direct the RNA-induced silencing complex (RISC) to complementary RNAs to degrade them or prevent their translation. Gene silencing mediated by siRNAs, also called RNA interference, controls the elimination of transcripts from mobile and repetitive DNA elements of the genome but also the degradation of exogenous RNA of viral origin for instance. The miRNA pathway on the other side is a mean to specifically regulate the expression of target genes. The sequence is that of Endoribonuclease Dicer (dicer1) from Danio rerio (Zebrafish).